Reading from the N-terminus, the 469-residue chain is Protein DETOXIFICATION 18 (469 aa).

The next 12 helical transmembrane spans lie at 40–60, 73–93, 121–141, 152–172, 183–203, 206–226, 252–274, 293–313, 344–364, 374–394, 406–426, and 438–458; these read LPMI…VMFA, LANS…SGAL, LVFT…FLLL, ALYM…QNIL, PLVL…YALV, AGLG…IAFV, HVVL…YWAF, LVAI…GLSA, VLAL…VGLF, FASL…QGVL, LATV…SVLC, and WIGL…MTIF.

This sequence belongs to the multi antimicrobial extrusion (MATE) (TC 2.A.66.1) family.

It is found in the membrane. The chain is Protein DETOXIFICATION 18 from Arabidopsis thaliana (Mouse-ear cress).